We begin with the raw amino-acid sequence, 486 residues long: Protein ZINC INDUCED FACILITATOR 1 (486 aa).

A run of 12 helical transmembrane segments spans residues 41–61, 82–102, 109–129, 131–151, 170–190, 212–232, 288–308, 327–347, 362–384, 391–408, 423–443, and 461–481; these read FVWI…PFLY, FVGC…GIVA, PIIL…GLSS, FWMA…LGTM, AVST…GFLA, ALPC…CCFI, IIVY…FALW, TVLA…YPLA, ALMI…SLSL, ILIN…LILQ, IAMT…GILF, and VFFV…KPFL.

Belongs to the major facilitator superfamily. As to expression, strongly expressed in developing leaves, differentiating zones of root tips and sepals of developing flowers. Restricted to vascular tissues in older leaves, mature roots, flowers, anthers and filaments. Not expressed in developing anthers.

Its subcellular location is the vacuole membrane. Its function is as follows. Major facilitator superfamily (MFS) transporter involved in zinc tolerance by participating in vacuolar sequestration of zinc. The chain is Protein ZINC INDUCED FACILITATOR 1 (ZIF1) from Arabidopsis thaliana (Mouse-ear cress).